The following is a 271-amino-acid chain: Pyrroline-5-carboxylate reductase (271 aa).

This sequence belongs to the pyrroline-5-carboxylate reductase family.

It localises to the cytoplasm. It catalyses the reaction L-proline + NADP(+) = (S)-1-pyrroline-5-carboxylate + NADPH + 2 H(+). The enzyme catalyses L-proline + NAD(+) = (S)-1-pyrroline-5-carboxylate + NADH + 2 H(+). Its pathway is amino-acid biosynthesis; L-proline biosynthesis; L-proline from L-glutamate 5-semialdehyde: step 1/1. Functionally, catalyzes the reduction of 1-pyrroline-5-carboxylate (PCA) to L-proline. The protein is Pyrroline-5-carboxylate reductase of Staphylococcus aureus (strain Mu50 / ATCC 700699).